The sequence spans 184 residues: Shikimate kinase (184 aa).

Residue 15 to 20 (GAGKTS) coordinates ATP. T19 lines the Mg(2+) pocket. The substrate site is built by D37, R61, and G83. Residue R123 coordinates ATP. Substrate is bound at residue R142.

Belongs to the shikimate kinase family. Monomer. The cofactor is Mg(2+).

Its subcellular location is the cytoplasm. The enzyme catalyses shikimate + ATP = 3-phosphoshikimate + ADP + H(+). It participates in metabolic intermediate biosynthesis; chorismate biosynthesis; chorismate from D-erythrose 4-phosphate and phosphoenolpyruvate: step 5/7. Functionally, catalyzes the specific phosphorylation of the 3-hydroxyl group of shikimic acid using ATP as a cosubstrate. This chain is Shikimate kinase, found in Coxiella burnetii (strain CbuK_Q154) (Coxiella burnetii (strain Q154)).